A 2207-amino-acid polypeptide reads, in one-letter code: Genome polyprotein (2207 aa).

Residue G2 is the site of N-myristoyl glycine; by host attachment. Topologically, residues 2–1518 are cytoplasmic; the sequence is GAQVSSQKVG…NINRAMTILQ (1517 aa). An amphipathic alpha-helix region spans residues 579–599; that stretch reads GLGDLIEGVVEGVTRNALTPL. The span at 597–613 shows a compositional bias: polar residues; it reads TPLTPANNLPDTQSSGP. Disordered regions lie at residues 597–620 and 628–647; these read TPLTPANNLPDTQSSGPAHSKETP and GATNPLVPSDTVQTRHVIQK. Catalysis depends on for protease 2A activity residues H899 and D917. Zn(2+)-binding residues include C934 and C936. The active-site For protease 2A activity is C988. Zn(2+)-binding residues include C994 and H996. Positions 1126–1198 are membrane-binding; sequence GDSWLKKFTE…HQSCPSQEHQ (73 aa). The tract at residues 1126–1264 is oligomerization; sequence GDSWLKKFTE…SPGTGKSVAT (139 aa). An RNA-binding region spans residues 1147–1151; that stretch reads SNKIS. The SF3 helicase domain maps to 1230-1386; sequence EHTINNYVQF…SEYSRDGKLN (157 aa). Residue 1254 to 1261 coordinates ATP; that stretch reads GSPGTGKS. Positions 1394, 1397, 1406, and 1411 each coordinate Zn(2+). The C4-type zinc-finger motif lies at 1394 to 1411; sequence CKNCHHPANFKRCCPLVC. The interval 1438-1445 is RNA-binding; sequence ERNRRSSI. Residues 1449–1454 form an oligomerization region; it reads MEALFQ. The stretch at 1519–1534 is an intramembrane region; sequence AVTTFAAVAGVVYVMY. Residues 1535-2207 are Cytoplasmic-facing; sequence KLFAGHQGAY…TLYRRWLDSF (673 aa). Y1544 bears the O-(5'-phospho-RNA)-tyrosine mark. The Peptidase C3 domain maps to 1564-1742; it reads GPGFDYAVAM…FAAALKRSYF (179 aa). Active-site for protease 3C activity residues include H1603, E1634, and C1710. In terms of domain architecture, RdRp catalytic spans 1973–2088; sequence EKLFAFDYTG…SYPHEVDASL (116 aa). Residues D1979 and D2074 each contribute to the Mg(2+) site.

It belongs to the picornaviruses polyprotein family. Interacts with capsid protein VP1 and capsid protein VP3 to form heterotrimeric protomers. In terms of assembly, interacts with capsid protein VP0, and capsid protein VP3 to form heterotrimeric protomers. Interacts with human PVR. Five protomers subsequently associate to form pentamers which serve as building blocks for the capsid. Interacts with capsid protein VP2, capsid protein VP3 and capsid protein VP4 following cleavage of capsid protein VP0. As to quaternary structure, interacts with capsid protein VP1 and capsid protein VP3 in the mature capsid. Interacts with capsid protein VP0 and capsid protein VP1 to form heterotrimeric protomers. Five protomers subsequently associate to form pentamers which serve as building blocks for the capsid. Interacts with capsid protein VP4 in the mature capsid. Interacts with protein 2C; this interaction may be important for virion morphogenesis. In terms of assembly, interacts with capsid protein VP1 and capsid protein VP3. As to quaternary structure, homodimer. Homohexamer; forms a hexameric ring structure with 6-fold symmetry characteristic of AAA+ ATPases. Interacts (via N-terminus) with host RTN3 (via reticulon domain); this interaction is important for viral replication. Interacts with capsid protein VP3; this interaction may be important for virion morphogenesis. In terms of assembly, interacts with protein 3CD. As to quaternary structure, homodimer. Interacts with host GBF1. Interacts (via GOLD domain) with host ACBD3 (via GOLD domain); this interaction allows the formation of a viral protein 3A/ACBD3 heterotetramer with a 2:2 stoichiometry, which will stimulate the recruitment of host PI4KB in order to synthesize PI4P at the viral RNA replication sites. Interacts with RNA-directed RNA polymerase. In terms of assembly, interacts with protein 3AB and with RNA-directed RNA polymerase. As to quaternary structure, interacts with Viral protein genome-linked and with protein 3CD. Requires Mg(2+) as cofactor. Post-translationally, specific enzymatic cleavages in vivo by the viral proteases yield processing intermediates and the mature proteins. Myristoylation is required for the formation of pentamers during virus assembly. Further assembly of 12 pentamers and a molecule of genomic RNA generates the provirion. In terms of processing, during virion maturation, immature virions are rendered infectious following cleavage of VP0 into VP4 and VP2. This maturation seems to be an autocatalytic event triggered by the presence of RNA in the capsid and it is followed by a conformational change infectious virion. Post-translationally, myristoylation is required during RNA encapsidation and formation of the mature virus particle. VPg is uridylylated by the polymerase into VPg-pUpU. This acts as a nucleotide-peptide primer for the genomic RNA replication.

It localises to the virion. The protein resides in the host cytoplasm. The protein localises to the host cytoplasmic vesicle membrane. It is found in the host nucleus. It carries out the reaction a ribonucleoside 5'-triphosphate + H2O = a ribonucleoside 5'-diphosphate + phosphate + H(+). The enzyme catalyses Selective cleavage of Tyr-|-Gly bond in the picornavirus polyprotein.. It catalyses the reaction RNA(n) + a ribonucleoside 5'-triphosphate = RNA(n+1) + diphosphate. The catalysed reaction is Selective cleavage of Gln-|-Gly bond in the poliovirus polyprotein. In other picornavirus reactions Glu may be substituted for Gln, and Ser or Thr for Gly.. With respect to regulation, replication or transcription is subject to high level of random mutations by the nucleotide analog ribavirin. Forms an icosahedral capsid of pseudo T=3 symmetry with capsid proteins VP2 and VP3. The capsid is 300 Angstroms in diameter, composed of 60 copies of each capsid protein and enclosing the viral positive strand RNA genome. Capsid protein VP1 mainly forms the vertices of the capsid. Capsid protein VP1 interacts with host cell receptor PVR to provide virion attachment to target host cells. This attachment induces virion internalization predominantly through clathrin- and caveolin-independent endocytosis in Hela cells and through caveolin-mediated endocytosis in brain microvascular endothelial cells. Tyrosine kinases are probably involved in the entry process. Virus binding to PVR induces increased junctional permeability and rearrangement of junctional proteins. Modulation of endothelial tight junctions, as well as cytolytic infection of endothelial cells themselves, may result in loss of endothelial integrity which may help the virus to reach the CNS. After binding to its receptor, the capsid undergoes conformational changes. Capsid protein VP1 N-terminus (that contains an amphipathic alpha-helix) and capsid protein VP4 are externalized. Together, they shape a pore in the host membrane through which viral genome is translocated to host cell cytoplasm. Its function is as follows. Forms an icosahedral capsid of pseudo T=3 symmetry with capsid proteins VP2 and VP3. The capsid is 300 Angstroms in diameter, composed of 60 copies of each capsid protein and enclosing the viral positive strand RNA genome. In terms of biological role, lies on the inner surface of the capsid shell. After binding to the host receptor, the capsid undergoes conformational changes. Capsid protein VP4 is released, Capsid protein VP1 N-terminus is externalized, and together, they shape a pore in the host membrane through which the viral genome is translocated into the host cell cytoplasm. Functionally, component of immature procapsids, which is cleaved into capsid proteins VP4 and VP2 after maturation. Allows the capsid to remain inactive before the maturation step. Cysteine protease that cleaves viral polyprotein and specific host proteins. It is responsible for the autocatalytic cleavage between the P1 and P2 regions, which is the first cleavage occurring in the polyprotein. Also cleaves the host translation initiation factor EIF4G1, in order to shut down the capped cellular mRNA translation. Inhibits the host nucleus-cytoplasm protein and RNA trafficking by cleaving host members of the nuclear pores including NUP98, NUP62 and NUP153. Counteracts stress granule formation probably by antagonizing its assembly or promoting its dissassembly. Cleaves and inhibits host IFIH1/MDA5, thereby inhibiting the type-I IFN production and the establishment of the antiviral state. Cleaves and inhibits host MAVS, thereby inhibiting the type-I IFN production and the establishment of the antiviral state. Its function is as follows. Plays an essential role in the virus replication cycle by acting as a viroporin. Creates a pore in the host endoplasmic reticulum and as a consequence releases Ca2+ in the cytoplasm of infected cell. In turn, high levels of cytoplasmic calcium may trigger membrane trafficking and transport of viral ER-associated proteins to viroplasms, sites of viral genome replication. In terms of biological role, induces and associates with structural rearrangements of intracellular membranes. Displays RNA-binding, nucleotide binding and NTPase activities. May play a role in virion morphogenesis and viral RNA encapsidation by interacting with the capsid protein VP3. Functionally, localizes the viral replication complex to the surface of membranous vesicles. Together with protein 3CD binds the Cis-Active RNA Element (CRE) which is involved in RNA synthesis initiation. Acts as a cofactor to stimulate the activity of 3D polymerase, maybe through a nucleid acid chaperone activity. Localizes the viral replication complex to the surface of membranous vesicles. It inhibits host cell endoplasmic reticulum-to-Golgi apparatus transport and causes the disassembly of the Golgi complex, possibly through GBF1 interaction. This would result in depletion of MHC, trail receptors and IFN receptors at the host cell surface. Plays an essential role in viral RNA replication by recruiting ACBD3 and PI4KB at the viral replication sites, thereby allowing the formation of the rearranged membranous structures where viral replication takes place. Its function is as follows. Acts as a primer for viral RNA replication and remains covalently bound to viral genomic RNA. VPg is uridylylated prior to priming replication into VPg-pUpU. The oriI viral genomic sequence may act as a template for this. The VPg-pUpU is then used as primer on the genomic RNA poly(A) by the RNA-dependent RNA polymerase to replicate the viral genome. During genome replication, the VPg-RNA linkage is removed by the host TDP2, thereby accelerating replication. During the late stage of the replication cycle, host TDP2 is excluded from sites of viral RNA synthesis and encapsidation, allowing for the generation of progeny virions. In terms of biological role, involved in the viral replication complex and viral polypeptide maturation. It exhibits protease activity with a specificity and catalytic efficiency that is different from protease 3C. Protein 3CD lacks polymerase activity. Protein 3CD binds to the 5'UTR of the viral genome. Functionally, major viral protease that mediates proteolytic processing of the polyprotein. Cleaves host EIF5B, contributing to host translation shutoff. Also cleaves host PABPC1, contributing to host translation shutoff. Cleaves host RIGI and thus contributes to the inhibition of type I interferon production. Cleaves host NLRP1, triggers host N-glycine-mediated degradation of the autoinhibitory NLRP1 N-terminal fragment. Inhibits the integrated stress response (ISR) in the infected cell by cleaving host G3BP1. Stress granule formation is thus inhibited, which allows protein synthesis and viral replication. Replicates the viral genomic RNA on the surface of intracellular membranes. May form linear arrays of subunits that propagate along a strong head-to-tail interaction called interface-I. Covalently attaches UMP to a tyrosine of VPg, which is used to prime RNA synthesis. The positive stranded RNA genome is first replicated at virus induced membranous vesicles, creating a dsRNA genomic replication form. This dsRNA is then used as template to synthesize positive stranded RNA genomes. ss(+)RNA genomes are either translated, replicated or encapsidated. In Homo sapiens (Human), this protein is Genome polyprotein.